The chain runs to 707 residues: UvrABC system protein C (707 aa).

One can recognise a GIY-YIG domain in the interval 14–94 (AEPGCYLMKD…IKKHRPRFNV (81 aa)). In terms of domain architecture, UVR spans 206–241 (GELVERLRGRMAGAAEGLRFEEAARLRDQLQAVERS). The segment at 654-684 (PDAPPAAADEPSGAPEGTPAGGPAEAIPDAA) is disordered. The segment covering 658 to 684 (PAAADEPSGAPEGTPAGGPAEAIPDAA) has biased composition (low complexity).

The protein belongs to the UvrC family. Interacts with UvrB in an incision complex.

Its subcellular location is the cytoplasm. In terms of biological role, the UvrABC repair system catalyzes the recognition and processing of DNA lesions. UvrC both incises the 5' and 3' sides of the lesion. The N-terminal half is responsible for the 3' incision and the C-terminal half is responsible for the 5' incision. The sequence is that of UvrABC system protein C from Anaeromyxobacter dehalogenans (strain 2CP-C).